Here is a 213-residue protein sequence, read N- to C-terminus: Redox-sensing transcriptional repressor Rex (213 aa).

The segment at residues 17-56 (LYYRIFKRFYADQVEKASSKQIADAMGIDSATVRRDFSYF) is a DNA-binding region (H-T-H motif). 91 to 96 (GCGNIG) contributes to the NAD(+) binding site.

It belongs to the transcriptional regulatory Rex family. As to quaternary structure, homodimer.

Its subcellular location is the cytoplasm. Its function is as follows. Modulates transcription in response to changes in cellular NADH/NAD(+) redox state. This Streptococcus uberis (strain ATCC BAA-854 / 0140J) protein is Redox-sensing transcriptional repressor Rex.